The sequence spans 351 residues: Protein RecA (351 aa).

Residue Gly-68–Thr-75 coordinates ATP.

The protein belongs to the RecA family.

It localises to the cytoplasm. Can catalyze the hydrolysis of ATP in the presence of single-stranded DNA, the ATP-dependent uptake of single-stranded DNA by duplex DNA, and the ATP-dependent hybridization of homologous single-stranded DNAs. It interacts with LexA causing its activation and leading to its autocatalytic cleavage. The polypeptide is Protein RecA (Thermotoga neapolitana (strain ATCC 49049 / DSM 4359 / NBRC 107923 / NS-E)).